The chain runs to 205 residues: Small ribosomal subunit protein uS4 (205 aa).

Residues 26-47 form a disordered region; that stretch reads PVNKREYGPGQHGQRRKQKPSD. Residues 94–154 enclose the S4 RNA-binding domain; the sequence is RRLDAVVYRL…EKSKHLAIVL (61 aa).

This sequence belongs to the universal ribosomal protein uS4 family. In terms of assembly, part of the 30S ribosomal subunit. Contacts protein S5. The interaction surface between S4 and S5 is involved in control of translational fidelity.

One of the primary rRNA binding proteins, it binds directly to 16S rRNA where it nucleates assembly of the body of the 30S subunit. Functionally, with S5 and S12 plays an important role in translational accuracy. The polypeptide is Small ribosomal subunit protein uS4 (Gluconacetobacter diazotrophicus (strain ATCC 49037 / DSM 5601 / CCUG 37298 / CIP 103539 / LMG 7603 / PAl5)).